Consider the following 65-residue polypeptide: Large ribosomal subunit protein uL29 (65 aa).

The protein belongs to the universal ribosomal protein uL29 family.

In Acinetobacter baylyi (strain ATCC 33305 / BD413 / ADP1), this protein is Large ribosomal subunit protein uL29.